The chain runs to 304 residues: D-alanine--D-alanine ligase (304 aa).

The 196-residue stretch at 104–299 folds into the ATP-grasp domain; it reads KMVWLSCGLP…FEALCLAILA (196 aa). Residue 130 to 185 participates in ATP binding; the sequence is ARDLGLPIFVKPVHEGSSMGATKVTEAGQLRAAWELAARYDSLVIAEEFISGQELT. 3 residues coordinate Mg(2+): D253, E266, and N268.

Belongs to the D-alanine--D-alanine ligase family. It depends on Mg(2+) as a cofactor. The cofactor is Mn(2+).

It is found in the cytoplasm. The catalysed reaction is 2 D-alanine + ATP = D-alanyl-D-alanine + ADP + phosphate + H(+). It functions in the pathway cell wall biogenesis; peptidoglycan biosynthesis. Functionally, cell wall formation. The chain is D-alanine--D-alanine ligase from Azoarcus sp. (strain BH72).